The primary structure comprises 423 residues: GTPase ERA-like, chloroplastic (423 aa).

A chloroplast-targeting transit peptide spans 1–60; it reads MELGLALRLVAPPPRLPCRALQPPPMPCFSPCAARRSRIRSSRLERRVGVVVSGGSMASL. Residues 124 to 294 enclose the Era-type G domain; it reads RSGYVAVLGK…KEWILSKLPL (171 aa). Residues 132–139 are G1; sequence GKPNVGKS. 132–139 provides a ligand contact to GTP; it reads GKPNVGKS. The segment at 158–162 is G2; sequence QTTRH. Residues 179 to 182 are G3; it reads DTPG. GTP-binding positions include 179-183 and 244-247; these read DTPGV and NKKD. The interval 244–247 is G4; the sequence is NKKD. A G5 region spans residues 273 to 275; the sequence is ISA. The 78-residue stretch at 325–402 folds into the KH type-2 domain; that stretch reads YRQEIPYACQ…YLEIMVKVKE (78 aa).

The protein belongs to the TRAFAC class TrmE-Era-EngA-EngB-Septin-like GTPase superfamily. Era GTPase family.

Its subcellular location is the plastid. It is found in the chloroplast stroma. It localises to the chloroplast nucleoid. Functionally, nuclear genome-encoded probable GTPase involved in ribosome biogenesis in chloroplasts. Plays a role in 16S rRNA maturation in plastids and may contribute to the assembly of the small (30S) ribosomal subunit. This Oryza sativa subsp. japonica (Rice) protein is GTPase ERA-like, chloroplastic.